The chain runs to 152 residues: Ribonuclease H (152 aa).

Positions 1 to 142 constitute an RNase H type-1 domain; sequence MDSKVVIYTD…ADKLAVQGRE (142 aa). Mg(2+) is bound by residues D10, E48, D70, and D134.

This sequence belongs to the RNase H family. In terms of assembly, monomer. Mg(2+) is required as a cofactor.

The protein resides in the cytoplasm. The catalysed reaction is Endonucleolytic cleavage to 5'-phosphomonoester.. In terms of biological role, endonuclease that specifically degrades the RNA of RNA-DNA hybrids. This is Ribonuclease H from Rickettsia felis (strain ATCC VR-1525 / URRWXCal2) (Rickettsia azadi).